Consider the following 615-residue polypeptide: Semenogelin-1 (615 aa).

The first 23 residues, 1–23, serve as a signal peptide directing secretion; sequence MKPIIFLVLSLLLILEKQAAVMG. Gln-24 carries the post-translational modification Pyrrolidone carboxylic acid. 3 disordered regions span residues 24 to 118, 133 to 160, and 172 to 585; these read QKGG…EHGK, GHAPHGTQNPSQDQGNSTSGKGISSQDS, and GKEQ…HRSY. Residues 34 to 46 show a composition bias toward polar residues; that stretch reads SESSQFPHGQKGQ. The segment covering 50–80 has biased composition (basic and acidic residues); that stretch reads ARKDKQHAESKRSVSIEHTYHVDIPDHDQTR. Positions 81–91 are enriched in polar residues; it reads TSKQYDLNAQN. The span at 107–118 shows a compositional bias: basic and acidic residues; that stretch reads FNHKQEGREHGK. Composition is skewed to polar residues over residues 138-160, 177-196, and 209-224; these read GTQNPSQDQGNSTSGKGISSQDS, SVSGTQRNGTQGGSQSSPVL, and TQNSLQNKGSSPNVNE. N-linked (GlcNAc...) asparagine glycosylation is found at Asn-148, Asn-184, and Asn-223. Residues 241–253 show a composition bias toward basic and acidic residues; sequence QEDRLQHGSKDVF. A compositionally biased stretch (polar residues) spans 254-265; that stretch reads SKNQNQTRNPNQ. Asn-258 and Asn-275 each carry an N-linked (GlcNAc...) asparagine glycan. Positions 283-300 are enriched in basic and acidic residues; it reads TEERRPNHGEKGIQKDAS. N-linked (GlcNAc...) asparagine glycosylation occurs at Asn-306. Over residues 308–317 the composition is skewed to basic and acidic residues; sequence TEDKMHDKSQ. Asn-332 carries an N-linked (GlcNAc...) asparagine glycan. The segment covering 341-358 has biased composition (basic and acidic residues); it reads TEERRPNHGEKGIQKDAS. A glycan (N-linked (GlcNAc...) asparagine) is linked at Asn-364. The segment covering 366 to 375 has biased composition (basic and acidic residues); that stretch reads TEDKMHDKSQ. Asn-390 carries N-linked (GlcNAc...) asparagine glycosylation. Basic and acidic residues predominate over residues 399–416; sequence TEERRPNHGEKGIQKDAS. A glycan (N-linked (GlcNAc...) asparagine) is linked at Asn-422. Over residues 424–433 the composition is skewed to basic and acidic residues; sequence TEDKMHDKSQ. Asn-448 carries an N-linked (GlcNAc...) asparagine glycan. A compositionally biased stretch (basic and acidic residues) spans 457 to 474; that stretch reads TEERRPNHGEKGIQKDAS. Asn-480 carries an N-linked (GlcNAc...) asparagine glycan. The span at 481-491 shows a compositional bias: basic and acidic residues; that stretch reads KTEDKMHDKSQ. The N-linked (GlcNAc...) asparagine glycan is linked to Asn-506. Residues 515-532 are compositionally biased toward basic and acidic residues; the sequence is TEERRPNHGEKGIQKDAS. N-linked (GlcNAc...) asparagine glycosylation is present at Asn-538. Residues 539 to 549 show a composition bias toward basic and acidic residues; that stretch reads KTEDEKHDKSQ. Over residues 550-563 the composition is skewed to polar residues; that stretch reads KQVTTPSQDQQSGQ.

The protein belongs to the semenogelin family. In terms of assembly, occurs in disulfide-linked complexes. Post-translationally, transglutaminase substrate. In terms of processing, rapidly cleaved after ejaculation by KLK3/PSA, resulting in liquefaction of the semen coagulum and the progressive release of motile spermatozoa.

The protein localises to the secreted. Functionally, predominant protein in semen. It participates in the formation of a gel matrix entrapping the accessory gland secretions and ejaculated spermatozoa. Fragments of semenogelin and/or fragments of the related proteins may contribute to the activation of progressive sperm movements as the gel-forming proteins are fragmented by KLK3/PSA. This chain is Semenogelin-1 (SEMG1), found in Saguinus oedipus (Cotton-top tamarin).